Reading from the N-terminus, the 714-residue chain is Phosphate acetyltransferase (714 aa).

The phosphate acetyltransferase stretch occupies residues 390–714 (AFRYQLTELA…TAIQASQQQQ (325 aa)).

This sequence in the N-terminal section; belongs to the CobB/CobQ family. In the C-terminal section; belongs to the phosphate acetyltransferase and butyryltransferase family. As to quaternary structure, homohexamer.

It is found in the cytoplasm. The enzyme catalyses acetyl-CoA + phosphate = acetyl phosphate + CoA. It carries out the reaction propanoyl-CoA + phosphate = propanoyl phosphate + CoA. The protein operates within metabolic intermediate biosynthesis; acetyl-CoA biosynthesis; acetyl-CoA from acetate: step 2/2. Allosterically inhibited by NADH. In terms of biological role, involved in acetate metabolism. Catalyzes the reversible interconversion of acetyl-CoA and acetyl phosphate. The direction of the overall reaction changes depending on growth conditions. Required for acetate recapture but not for acetate excretion when this organism is grown on ethanolamine (EA); is unable to complement an eutD deletion during growth on EA. Works with proprionate kinase PduW to capture exogenous propionate and regenerate propionyl-CoA during degradation of propionate and 1,2-propanediol (1,2-PD). This chain is Phosphate acetyltransferase (pta), found in Salmonella typhimurium (strain LT2 / SGSC1412 / ATCC 700720).